The sequence spans 604 residues: Membrane protein insertase YidC (604 aa).

A helical membrane pass occupies residues 8–28; the sequence is LYLAIGLSLLVLIGWNYFFAG. Residues 42-84 are disordered; sequence EQQAQTQTTSDTTARSDLNVPGQRSLPGESPQTQLSRPEALAA. Residues 43 to 58 show a composition bias toward low complexity; that stretch reads QQAQTQTTSDTTARSD. A run of 5 helical transmembrane segments spans residues 349-369, 375-395, 449-469, 507-527, and 546-566; these read FDLL…FWIL, VVGN…AVFF, LPML…FVTI, MIGH…SMFF, and WMPV…VIYW.

It belongs to the OXA1/ALB3/YidC family. Type 1 subfamily. In terms of assembly, interacts with the Sec translocase complex via SecD. Specifically interacts with transmembrane segments of nascent integral membrane proteins during membrane integration.

It localises to the cell inner membrane. Required for the insertion and/or proper folding and/or complex formation of integral membrane proteins into the membrane. Involved in integration of membrane proteins that insert both dependently and independently of the Sec translocase complex, as well as at least some lipoproteins. Aids folding of multispanning membrane proteins. In Beijerinckia indica subsp. indica (strain ATCC 9039 / DSM 1715 / NCIMB 8712), this protein is Membrane protein insertase YidC.